Consider the following 284-residue polypeptide: Steroidogenic acute regulatory protein, mitochondrial (284 aa).

The N-terminal 62 residues, methionine 1–leucine 62, are a transit peptide targeting the mitochondrion. 2 positions are modified to phosphoserine; by PKA: serine 56 and serine 194. The START domain maps to leucine 66–alanine 279.

In terms of assembly, may interact with TSPO.

The protein localises to the mitochondrion. It participates in steroid metabolism; cholesterol metabolism. Plays a key role in steroid hormone synthesis by enhancing the metabolism of cholesterol into pregnenolone. Mediates the transfer of cholesterol from the outer mitochondrial membrane to the inner mitochondrial membrane where it is cleaved to pregnenolone. The polypeptide is Steroidogenic acute regulatory protein, mitochondrial (STAR) (Mesocricetus auratus (Golden hamster)).